We begin with the raw amino-acid sequence, 195 residues long: Thymidylate kinase (195 aa).

7 to 14 provides a ligand contact to ATP; it reads GIDGVGKS.

The protein belongs to the thymidylate kinase family.

It catalyses the reaction dTMP + ATP = dTDP + ADP. Its function is as follows. Phosphorylation of dTMP to form dTDP in both de novo and salvage pathways of dTTP synthesis. The sequence is that of Thymidylate kinase from Campylobacter concisus (strain 13826).